The chain runs to 249 residues: Cis-4-hydroxycyclohexanecarboxylate dehydrogenase (249 aa).

NAD(+) is bound by residues D38, D63, V64, N90, Y156, K160, A189, and T191. Y156 acts as the Proton acceptor in catalysis.

The protein belongs to the short-chain dehydrogenases/reductases (SDR) family. Homotetramer.

It carries out the reaction cis-4-hydroxycyclohexane-1-carboxylate + NAD(+) = 4-oxocyclohexane-1-carboxylate + NADH + H(+). In terms of biological role, dehydrogenase involved in a cyclohexanecarboxylate (CHCA) degradation pathway. Catalyzes the NAD(+)-dependent dehydrogenation of cis-4-hydroxycyclohexanecarboxylate (cis-4-hydroxyCHCA) to form 4-oxocyclohexanecarboxylate (4-oxoCHCA). Is highly specific for the cis-4-hydroxy derivative and shows only weak activity with trans-4-hydroxyCHCA. Cannot use NADP(+). The protein is Cis-4-hydroxycyclohexanecarboxylate dehydrogenase of Sinomonas cyclohexanicum (Corynebacterium cyclohexanicum).